A 288-amino-acid polypeptide reads, in one-letter code: MKDRTQELRTAKDSDDDDDVAVTVDRDRFMDEFFEQVEEIRGFIDKIAENVEEVKRKHSAILASPNPDEKTKEELEELMSDIKKTANKVRSKLKSIEQSIEQEEGLNRSSADLRIRKTQHSTLSRKFVEVMSEYNATQSDYRERCKGRIQRQLEITGRTTTSEELEDMLESGNPAIFASGIIMDSSISKQALSEIETRHSEIIKLENSIRELHDMFMDMAMLVESQGEMIDRIEYNVEHAVDYVERAVSDTKKAVKYQSKARRKKIMIIICCVIPGIVIASTVGGIFA.

Residues 1–265 are Cytoplasmic-facing; sequence MKDRTQELRT…KYQSKARRKK (265 aa). Phosphoserine is present on residues S14, S64, and S95. Residues 68-109 are a coiled coil; the sequence is DEKTKEELEELMSDIKKTANKVRSKLKSIEQSIEQEEGLNRS. Residue S188 is modified to Phosphoserine; by DAPK1. The 63-residue stretch at 192-254 folds into the t-SNARE coiled-coil homology domain; it reads LSEIETRHSE…ERAVSDTKKA (63 aa). Glycyl lysine isopeptide (Lys-Gly) (interchain with G-Cter in SUMO) cross-links involve residues K252, K253, and K256. A helical; Anchor for type IV membrane protein membrane pass occupies residues 266–286; sequence IMIIICCVIPGIVIASTVGGI. Residues 287–288 lie on the Extracellular side of the membrane; the sequence is FA.

It belongs to the syntaxin family. As to quaternary structure, part of the SNARE core complex containing SNAP25, VAMP2 and STX1A; this complex constitutes the basic catalytic machinery of the complex neurotransmitter release apparatus. The SNARE complex interacts with CPLX1. Interacts with STXBP1. The interaction with STXBP1 promotes assembly of the SNARE complex. Interacts (via C-terminus) with KCNB1 (via C-terminus); the interaction increases in a calcium-dependent manner and induces a pore-independent enhancement of exocytosis in neuroendocrine cells, chromaffin cells, pancreatic beta cells and from the soma of dorsal root ganglia (DRG) neurons. Interacts with SYTL4. Interacts with STXBP6. Interacts with PLCL1 (via C2 domain). Interacts with OTOF. Interacts with LGI3. Interacts (via the H3 domain) with SLC6A4 (via the N-terminus); this interaction regulates SLC4A6 channel conductance in thalamocortical neurons. Interacts with SYT6 and SYT8; the interaction is Ca(2+)-dependent. Interacts with VAMP8. Interacts with SNAP23. Interacts with VAPA and SYBU. Interacts with PRRT2. Interacts with SEPT8. Interacts with STXBP5L. Interacts with synaptotagmin-1/SYT1. Interacts with SEPTIN5; in the cerebellar cortex. Interacts with SEPTIN4; in the striatum. Phosphorylated by CK2. Phosphorylation at Ser-188 by DAPK1 significantly decreases its interaction with STXBP1. Post-translationally, sumoylated, sumoylation is required for regulation of synaptic vesicle endocytosis.

The protein localises to the cytoplasmic vesicle. Its subcellular location is the secretory vesicle. It is found in the synaptic vesicle membrane. The protein resides in the cell membrane. It localises to the synapse. The protein localises to the synaptosome. In terms of biological role, plays an essential role in hormone and neurotransmitter calcium-dependent exocytosis and endocytosis. Part of the SNARE (Soluble NSF Attachment Receptor) complex composed of SNAP25, STX1A and VAMP2 which mediates the fusion of synaptic vesicles with the presynaptic plasma membrane. STX1A and SNAP25 are localized on the plasma membrane while VAMP2 resides in synaptic vesicles. The pairing of the three SNAREs from the N-terminal SNARE motifs to the C-terminal anchors leads to the formation of the SNARE complex, which brings membranes into close proximity and results in final fusion. Participates in the calcium-dependent regulation of acrosomal exocytosis in sperm. Also plays an important role in the exocytosis of hormones such as insulin or glucagon-like peptide 1 (GLP-1). The polypeptide is Syntaxin-1A (STX1A) (Pongo abelii (Sumatran orangutan)).